Reading from the N-terminus, the 539-residue chain is Phosphoenolpyruvate carboxykinase (ATP) (539 aa).

Residues arginine 64, tyrosine 206, and lysine 212 each contribute to the substrate site. ATP contacts are provided by residues lysine 212, histidine 231, and 247–255 (GLSGTGKTT). Positions 212 and 231 each coordinate Mn(2+). Aspartate 268 is a Mn(2+) binding site. Residues glutamate 296, arginine 332, 448–449 (RI), and threonine 454 contribute to the ATP site. Arginine 332 contributes to the substrate binding site.

This sequence belongs to the phosphoenolpyruvate carboxykinase (ATP) family. In terms of assembly, monomer. The cofactor is Mn(2+).

The protein resides in the cytoplasm. It catalyses the reaction oxaloacetate + ATP = phosphoenolpyruvate + ADP + CO2. It participates in carbohydrate biosynthesis; gluconeogenesis. Involved in the gluconeogenesis. Catalyzes the conversion of oxaloacetate (OAA) to phosphoenolpyruvate (PEP) through direct phosphoryl transfer between the nucleoside triphosphate and OAA. This chain is Phosphoenolpyruvate carboxykinase (ATP), found in Cronobacter sakazakii (strain ATCC BAA-894) (Enterobacter sakazakii).